We begin with the raw amino-acid sequence, 313 residues long: Olfactory receptor 6E1 (313 aa).

An N-linked (GlcNAc...) asparagine glycan is attached at asparagine 3. The next 7 helical transmembrane spans lie at 25-45, 64-84, 96-116, 142-162, 192-212, 238-258, and 271-291; these read IFLGFLLTYFLILLGNFLIIF, FAMLEIWFTSVIFPKMLTNII, FLQAFLYFFLGTTEFFLLAVM, LVFCSWMSGLLLIIVPSSIVF, LVEFLGFVIANFSLLGTLAVT, TCSSHIIVVSLFYGSCIFMYV, and KVVALLNTVVTPTLNPFIYTL. Cysteine 95 and cysteine 177 are disulfide-bonded.

It belongs to the G-protein coupled receptor 1 family.

The protein localises to the cell membrane. Odorant receptor. Activated by (-)-citronellal and to a lesser extent by (+)-citronellal. Not activated by carvone or limonene. This is Olfactory receptor 6E1 from Mus musculus (Mouse).